Here is a 207-residue protein sequence, read N- to C-terminus: Killer cell lectin-like receptor subfamily F member 2 (207 aa).

Residues 1-30 (MENEDGYMTLSFKNRCKSKQKSKDFSLYPQ) lie on the Cytoplasmic side of the membrane. The residue at position 7 (tyrosine 7) is a Phosphotyrosine. The chain crosses the membrane as a helical; Signal-anchor for type II membrane protein span at residues 31–51 (YYCLLLIFGCIVILIFIMTGI). The Extracellular portion of the chain corresponds to 52 to 207 (DLKFWHKKMD…ILTHNGTSGV (156 aa)). Asparagine 67 carries an N-linked (GlcNAc...) asparagine glycan. 3 disulfide bridges follow: cysteine 78/cysteine 89, cysteine 106/cysteine 193, and cysteine 172/cysteine 185. The C-type lectin domain occupies 85-194 (NEGKCYWFST…CSSTFKGICQ (110 aa)). A glycan (N-linked (GlcNAc...) asparagine) is linked at asparagine 202.

Homodimer; non-disulfide-linked. Interacts with CLEC2A. In terms of processing, N-glycosylated.

It is found in the cell membrane. Its function is as follows. C-type lectin-like receptor involved in natural killer cell mediated cytotoxicity and cytokine secretion in keratinocytes via its interaction with CLEC2A. Triggers degranulation in a SYK-dependent manner and stimulates SYK phosphotyrosinylation without recruiting SYK directly. This chain is Killer cell lectin-like receptor subfamily F member 2 (KLRF2), found in Homo sapiens (Human).